Here is a 586-residue protein sequence, read N- to C-terminus: GRB2-associated-binding protein 3 (586 aa).

The PH domain occupies 5–117 (DAVCTGWLVK…WVHSISQVCN (113 aa)). 2 disordered regions span residues 149–171 (AHAA…TEET) and 281–335 (SSTI…KKPE). A compositionally biased stretch (polar residues) spans 283–292 (TIQVDKNQGS). Over residues 316 to 326 (HLSERRQEEWS) the composition is skewed to basic and acidic residues. Ser344 bears the Phosphoserine mark. Residues 401 to 453 (GASGLGPHCSPDDYIPMNSGSISSPLPELPANLEPPPVNRDLKPQRKSRPPPL) are disordered. At Ser482 the chain carries Phosphoserine.

It belongs to the GAB family. As to quaternary structure, interacts with PIK3R/p85, SHP2 and GRAP2/MONA. May interact with Grb2. Phosphorylated on tyrosine residue(s) after macrophage colony-stimulating factor (M-CSF) receptor stimulation.

The polypeptide is GRB2-associated-binding protein 3 (GAB3) (Homo sapiens (Human)).